Here is a 1064-residue protein sequence, read N- to C-terminus: Serine/threonine protein kinase KIN1 (1064 aa).

Residues 1–113 (MDDYHVNTAF…SSQGMPKQFH (113 aa)) are disordered. Over residues 8 to 36 (TAFSMGRGNQQDDGNSESNSMHTQPSTMA) the composition is skewed to polar residues. Over residues 74-91 (AEQKERQVELEGKSRENA) the composition is skewed to basic and acidic residues. Positions 93–108 (KPNTTSQSRVSSSQGM) are enriched in polar residues. Residues 120–398 (WEFVETVGAG…LKQVVEHHWM (279 aa)) enclose the Protein kinase domain. Residues 126–134 (VGAGSMGKV) and Lys-149 contribute to the ATP site. Asp-269 functions as the Proton acceptor in the catalytic mechanism. Ser-534 carries the post-translational modification Phosphoserine. Residues 549–621 (SEPEATLATK…SPTPQGNDYQ (73 aa)) form a disordered region. Positions 557 to 571 (TKDTSVPFTPKNSDG) are enriched in polar residues. Ser-593 is subject to Phosphoserine. The span at 598–608 (KSSDNQRREME) shows a compositional bias: basic and acidic residues. At Ser-646 the chain carries Phosphoserine. Disordered stretches follow at residues 652 to 672 (TIEQTSVNSNNSINKPVQKTH), 694 to 714 (MNEPVKTNDSRGGNKGDFPAL), 762 to 797 (EGSDDDENHPLPPLNVAKGRKLHPSARAKSVGHARR), 823 to 843 (LESSDDNKSDSLGNVTSQTND), and 958 to 1016 (HESI…GMTT). The span at 654–670 (EQTSVNSNNSINKPVQK) shows a compositional bias: polar residues. Phosphoserine is present on Ser-764. Residues 779–794 (KGRKLHPSARAKSVGH) are compositionally biased toward basic residues. Composition is skewed to polar residues over residues 832-843 (DSLGNVTSQTND), 963-989 (RQGSNKYSPSSPLTTNSIHQRKTSITE), and 998-1016 (GTSLENIHQQGDGSEGMTT). Residue Ser-986 is modified to Phosphoserine. In terms of domain architecture, KA1 spans 1015–1064 (TTTEKEPIKFEIHIVKVRIVGLAGVHFKKISGNTWLYKELASSILKELKL).

Belongs to the protein kinase superfamily. CAMK Ser/Thr protein kinase family. NIM1 subfamily. As to quaternary structure, interacts with SEC9 and SRO7. Post-translationally, autophosphorylated.

It is found in the cytoplasm. It localises to the cell membrane. The catalysed reaction is L-seryl-[protein] + ATP = O-phospho-L-seryl-[protein] + ADP + H(+). It catalyses the reaction L-threonyl-[protein] + ATP = O-phospho-L-threonyl-[protein] + ADP + H(+). Its function is as follows. Serine/threonine protein kinase involved in the regulation of exocytosis. Induces phosphorylation of SEC9 and its release from the plasma membrane to the cytosol. The chain is Serine/threonine protein kinase KIN1 (KIN1) from Saccharomyces cerevisiae (strain ATCC 204508 / S288c) (Baker's yeast).